The chain runs to 103 residues: Large ribosomal subunit protein bL21 (103 aa).

This sequence belongs to the bacterial ribosomal protein bL21 family. In terms of assembly, part of the 50S ribosomal subunit. Contacts protein L20.

Functionally, this protein binds to 23S rRNA in the presence of protein L20. This Burkholderia mallei (strain NCTC 10247) protein is Large ribosomal subunit protein bL21.